Consider the following 455-residue polypeptide: Serine--tRNA ligase (455 aa).

252–254 (TAE) provides a ligand contact to L-serine. Residues 283–285 (RKE) and valine 299 each bind ATP. An L-serine-binding site is contributed by glutamate 306. 370-373 (EVVS) provides a ligand contact to ATP. Threonine 406 is an L-serine binding site.

Belongs to the class-II aminoacyl-tRNA synthetase family. Type-1 seryl-tRNA synthetase subfamily. Homodimer. The tRNA molecule binds across the dimer.

The protein resides in the cytoplasm. It carries out the reaction tRNA(Ser) + L-serine + ATP = L-seryl-tRNA(Ser) + AMP + diphosphate + H(+). The catalysed reaction is tRNA(Sec) + L-serine + ATP = L-seryl-tRNA(Sec) + AMP + diphosphate + H(+). It functions in the pathway aminoacyl-tRNA biosynthesis; selenocysteinyl-tRNA(Sec) biosynthesis; L-seryl-tRNA(Sec) from L-serine and tRNA(Sec): step 1/1. In terms of biological role, catalyzes the attachment of serine to tRNA(Ser). Is also able to aminoacylate tRNA(Sec) with serine, to form the misacylated tRNA L-seryl-tRNA(Sec), which will be further converted into selenocysteinyl-tRNA(Sec). This is Serine--tRNA ligase from Pyrococcus horikoshii (strain ATCC 700860 / DSM 12428 / JCM 9974 / NBRC 100139 / OT-3).